The primary structure comprises 199 residues: Recombination protein RecR (199 aa).

The C4-type zinc-finger motif lies at Cys57 to Cys72. The 96-residue stretch at Glu81–Pro176 folds into the Toprim domain.

The protein belongs to the RecR family.

In terms of biological role, may play a role in DNA repair. It seems to be involved in an RecBC-independent recombinational process of DNA repair. It may act with RecF and RecO. The polypeptide is Recombination protein RecR (Shewanella pealeana (strain ATCC 700345 / ANG-SQ1)).